The following is a 282-amino-acid chain: Proteasome subunit beta (282 aa).

Residues 1-55 (MDNSSTGRYPAASLPPAYLRPGSSSFTDFLRAQAPELLPTARSFPEGSVVQAAHG) constitute a propeptide, removed in mature form; by autocatalysis. Residue Thr56 is the Nucleophile of the active site.

The protein belongs to the peptidase T1B family. In terms of assembly, the 20S proteasome core is composed of 14 alpha and 14 beta subunits that assemble into four stacked heptameric rings, resulting in a barrel-shaped structure. The two inner rings, each composed of seven catalytic beta subunits, are sandwiched by two outer rings, each composed of seven alpha subunits. The catalytic chamber with the active sites is on the inside of the barrel. Has a gated structure, the ends of the cylinder being occluded by the N-termini of the alpha-subunits. Is capped by the proteasome-associated ATPase, ARC.

It localises to the cytoplasm. It catalyses the reaction Cleavage of peptide bonds with very broad specificity.. The protein operates within protein degradation; proteasomal Pup-dependent pathway. The formation of the proteasomal ATPase ARC-20S proteasome complex, likely via the docking of the C-termini of ARC into the intersubunit pockets in the alpha-rings, may trigger opening of the gate for substrate entry. Interconversion between the open-gate and close-gate conformations leads to a dynamic regulation of the 20S proteasome proteolysis activity. Component of the proteasome core, a large protease complex with broad specificity involved in protein degradation. This chain is Proteasome subunit beta, found in Actinosynnema mirum (strain ATCC 29888 / DSM 43827 / JCM 3225 / NBRC 14064 / NCIMB 13271 / NRRL B-12336 / IMRU 3971 / 101).